Here is a 293-residue protein sequence, read N- to C-terminus: MNNKKFQVNFNNIPKLPKGSFGGGFGLLALGGVGLLALSSLVNVEGGHRAIVFNRFVGIKNKVYNEGTHFIVPWFERAEIYDVRAKPRSISSLTGSKDLQMVNITIRVLSKPKVSQLPAIYRTLGKDYDERVLPSIVNEILKSIVAQFNASQLITQREQVSRLIFKRLVDRAKDFNIELDDVSITHLNFGREYAAAIEAKQVAQQEAERARFLVEKALQDKRSIIVKAEGEAQSAQLINDAIKQSPYLVQLRTLEASKEIAHILSKSPNKLYISNETLLLNGFDLNNNQQPKK.

The helical; Signal-anchor for type II membrane protein transmembrane segment at 21 to 41 (FGGGFGLLALGGVGLLALSSL) threads the bilayer. Residues 190–235 (GREYAAAIEAKQVAQQEAERARFLVEKALQDKRSIIVKAEGEAQSA) adopt a coiled-coil conformation.

This sequence belongs to the prohibitin family. In terms of assembly, the mitochondrial prohibitin complex consists of two subunits (PHB1 and PHB2), assembled into a membrane-associated ring-shaped supercomplex of approximately 1 mDa.

The protein localises to the mitochondrion inner membrane. The protein resides in the cytoplasm. It localises to the nucleus. Its subcellular location is the cell membrane. In terms of biological role, protein with pleiotropic attributes mediated in a cell-compartment- and tissue-specific manner, which include the plasma membrane-associated cell signaling functions, mitochondrial chaperone, and transcriptional co-regulator of transcription factors and sex steroid hormones in the nucleus. In the mitochondria, together with PHB, forms large ring complexes (prohibitin complexes) in the inner mitochondrial membrane (IMM) and functions as a chaperone protein that stabilizes mitochondrial respiratory enzymes and maintains mitochondrial integrity in the IMM, which is required for mitochondrial morphogenesis, neuronal survival, and normal lifespan. Functionally, in the nucleus, serves as transcriptional co-regulator. This is Prohibitin-2 (phbB) from Dictyostelium discoideum (Social amoeba).